The chain runs to 71 residues: Large ribosomal subunit protein eL38 (71 aa).

This sequence belongs to the eukaryotic ribosomal protein eL38 family.

The polypeptide is Large ribosomal subunit protein eL38 (RpL38) (Argas monolakensis (Mono lake bird tick)).